The sequence spans 357 residues: Sorbitol dehydrogenase (357 aa).

At Ala2 the chain carries N-acetylalanine. Cys45 is a binding site for Zn(2+). Tyr51 provides a ligand contact to substrate. The Zn(2+) site is built by His70 and Glu71. Glu156 is a substrate binding site. Ile184, Asp204, and Arg209 together coordinate NAD(+). Phosphoserine is present on residues Ser211 and Ser225. NAD(+)-binding positions include 273 to 275 (VGL) and 297 to 299 (VFR). 2 residues coordinate substrate: Arg299 and Tyr300.

The protein belongs to the zinc-containing alcohol dehydrogenase family. As to quaternary structure, homotetramer. Zn(2+) is required as a cofactor.

Its subcellular location is the mitochondrion membrane. The protein resides in the cell projection. The protein localises to the cilium. It is found in the flagellum. The catalysed reaction is xylitol + NAD(+) = D-xylulose + NADH + H(+). The enzyme catalyses L-iditol + NAD(+) = keto-L-sorbose + NADH + H(+). It carries out the reaction keto-D-fructose + NADH + H(+) = D-sorbitol + NAD(+). Polyol dehydrogenase that catalyzes the reversible NAD(+)-dependent oxidation of various sugar alcohols. Is active with xylitol, L-iditol and D-sorbitol (D-glucitol) as substrates, leading to the C2-oxidized products D-xylulose, L-sorbose and D-fructose, respectively. Is a key enzyme in the polyol pathway that interconverts glucose and fructose via sorbitol, which constitutes an important alternate route for glucose metabolism. May play a role in sperm motility by using sorbitol as an alternative energy source for sperm motility. The chain is Sorbitol dehydrogenase (SORD) from Macaca fascicularis (Crab-eating macaque).